The primary structure comprises 303 residues: ATP-dependent (S)-NAD(P)H-hydrate dehydratase (303 aa).

Residues 12–299 (QQQLVCSVIP…AEVRTAFSML (288 aa)) enclose the YjeF C-terminal domain. Residues Gly-106 and 158 to 164 (NAVELDR) each bind (6S)-NADPHX. ATP-binding positions include 194 to 198 (KGSED) and 213 to 222 (GSPRRCGGQG). Asp-223 serves as a coordination point for (6S)-NADPHX.

It belongs to the NnrD/CARKD family. Requires Mg(2+) as cofactor.

It catalyses the reaction (6S)-NADHX + ATP = ADP + phosphate + NADH + H(+). The enzyme catalyses (6S)-NADPHX + ATP = ADP + phosphate + NADPH + H(+). Its function is as follows. Catalyzes the dehydration of the S-form of NAD(P)HX at the expense of ATP, which is converted to ADP. Together with NAD(P)HX epimerase, which catalyzes the epimerization of the S- and R-forms, the enzyme allows the repair of both epimers of NAD(P)HX, a damaged form of NAD(P)H that is a result of enzymatic or heat-dependent hydration. The sequence is that of ATP-dependent (S)-NAD(P)H-hydrate dehydratase from Ixodes scapularis (Black-legged tick).